The primary structure comprises 427 residues: Trigger factor (427 aa).

The PPIase FKBP-type domain maps to Gly-163–Pro-248.

This sequence belongs to the FKBP-type PPIase family. Tig subfamily.

It localises to the cytoplasm. The catalysed reaction is [protein]-peptidylproline (omega=180) = [protein]-peptidylproline (omega=0). Functionally, involved in protein export. Acts as a chaperone by maintaining the newly synthesized protein in an open conformation. Functions as a peptidyl-prolyl cis-trans isomerase. In Streptococcus sanguinis (strain SK36), this protein is Trigger factor.